Consider the following 734-residue polypeptide: MATRFPKFSQGLSKDPTTRRIWYGIATAHDFESHDGITEEKLYQKIFASHFGQLAVIFLWTSGNLFHVAWQGNFEQWVQDPLHVRPIAHAIWDPHFGQPAVEAFTRGGASGPVNIAYSGVYQWWFTIGMRTNLDLYRGALFLLFLSTLALLAGWLHLQPKWKPSVSWFKNAESRLNHHLSGLFGVSSLAWSGHLVHVAIPEARGQHVRWDNFLTSIPHPQGLQPFFTGNWSIYAQDPDSMNHLFGTSEGAGTAILTFLGGFHPQTQSLWLTDIAHHHLAIAILFIVAGHMYRTNFGIGHSIKEILEAHTPPGGRLGRGHNGLYDTLNNSLHFQLGLALASLGVITSLVAQHMYSLPAYAFIAQDFTTQAALYTHHQYIAGFIMVGAFAHGAIFFIRDYNPEENKENVLARMLEHKEAIISHLSWASLFLGFHTLGLYVHNDVMQAFGTPEKQILIEPVFAQWIQATHGKTLYGFDVLLSSNQSPALNAGANLWLPGWLDAINNGNNSLFLTIGPGDFLVHHAIALGLHTTTLILVKGALDARGSKLMPDKKEFGYSFPCDGPGRGGTCDISAWDAFYLAVFWMLNTIGWVTFYWHWKHITLWQGNVSQFNESSTYLMGWLRDYLWLNSSQLINGYNPLGMNSLSVWAWMFLFGHLIWATGFMFLISWRGYWQELIETLAWAHERTPLANLIRWKDKPVALSIVQARLVGLSHFSVGYIFTYAAFLIASTSAKFG.

8 helical membrane passes run 46-69 (IFAS…FHVA), 135-158 (LYRG…LHLQ), 175-199 (LNHH…HVAI), 273-291 (IAHH…GHMY), 330-353 (LHFQ…QHMY), 369-395 (AALY…IFFI), 417-439 (AIIS…LYVH), and 517-535 (FLVH…LILV). [4Fe-4S] cluster contacts are provided by Cys559 and Cys568. Helical transmembrane passes span 575–596 (AFYL…YWHW) and 643–665 (LSVW…MFLI). 3 residues coordinate chlorophyll a: His654, Met662, and Tyr670. Residue Trp671 coordinates phylloquinone. The chain crosses the membrane as a helical span at residues 707–727 (LVGLSHFSVGYIFTYAAFLIA).

Belongs to the PsaA/PsaB family. The PsaA/B heterodimer binds the P700 chlorophyll special pair and subsequent electron acceptors. PSI consists of a core antenna complex that captures photons, and an electron transfer chain that converts photonic excitation into a charge separation. The eukaryotic PSI reaction center is composed of at least 11 subunits. It depends on P700 is a chlorophyll a/chlorophyll a' dimer, A0 is one or more chlorophyll a, A1 is one or both phylloquinones and FX is a shared 4Fe-4S iron-sulfur center. as a cofactor.

The protein localises to the plastid. It localises to the chloroplast thylakoid membrane. The enzyme catalyses reduced [plastocyanin] + hnu + oxidized [2Fe-2S]-[ferredoxin] = oxidized [plastocyanin] + reduced [2Fe-2S]-[ferredoxin]. PsaA and PsaB bind P700, the primary electron donor of photosystem I (PSI), as well as the electron acceptors A0, A1 and FX. PSI is a plastocyanin-ferredoxin oxidoreductase, converting photonic excitation into a charge separation, which transfers an electron from the donor P700 chlorophyll pair to the spectroscopically characterized acceptors A0, A1, FX, FA and FB in turn. Oxidized P700 is reduced on the lumenal side of the thylakoid membrane by plastocyanin. The polypeptide is Photosystem I P700 chlorophyll a apoprotein A2 (Chara vulgaris (Common stonewort)).